We begin with the raw amino-acid sequence, 261 residues long: Ethanolamine ammonia-lyase small subunit (261 aa).

Adenosylcob(III)alamin contacts are provided by valine 158, glutamate 179, and cysteine 208.

The protein belongs to the EutC family. As to quaternary structure, the basic unit is a heterodimer which dimerizes to form tetramers. The heterotetramers trimerize; 6 large subunits form a core ring with 6 small subunits projecting outwards. The cofactor is adenosylcob(III)alamin.

The protein resides in the bacterial microcompartment. It catalyses the reaction ethanolamine = acetaldehyde + NH4(+). It functions in the pathway amine and polyamine degradation; ethanolamine degradation. Its function is as follows. Catalyzes the deamination of various vicinal amino-alcohols to oxo compounds. Allows this organism to utilize ethanolamine as the sole source of nitrogen and carbon in the presence of external vitamin B12. This Bradyrhizobium diazoefficiens (strain JCM 10833 / BCRC 13528 / IAM 13628 / NBRC 14792 / USDA 110) protein is Ethanolamine ammonia-lyase small subunit.